The sequence spans 336 residues: MSGKLVLVTGVTGFIGAHVAEQLLQAGYRVRGTVRSMEKADELIRLNPGLKDKIEFVIVKDVSASNAFDGVLKDVELICHIASPFFVENVTDNKSQLLDPAVKGTLGILEAAQGVKSIKRIVITSSFAAVGNFQIDPHNNKVYTEKDWNPITYEEALTTDNGIVAYCASKKLAEEAAREYVKEKKPSYDICTINPPYVYGPPIHPMKNMDSLNTSNQIFWKLIDGSKEATPFYYYYVDVRDVAAAHVFALENAKLSNGRMLVSKGVFTTGDICKVLRKEFPNKSDVIAEPVDITVDPSFFKLDNSFSKSLGFKYHSDEECYVDTAKKLWERAEEFK.

Positions 39 and 166 each coordinate NADP(+).

Belongs to the NAD(P)-dependent epimerase/dehydratase family. Dihydroflavonol-4-reductase subfamily.

It is found in the cytoplasm. It localises to the nucleus. This is an uncharacterized protein from Schizosaccharomyces pombe (strain 972 / ATCC 24843) (Fission yeast).